Reading from the N-terminus, the 396-residue chain is Probable sugar efflux transporter (396 aa).

Residues 1 to 14 (MTTNTVSRKVAWLR) are Cytoplasmic-facing. The chain crosses the membrane as a helical span at residues 15-35 (VVTLAVAAFIFNTTEFVPVGL). Residues 36-49 (LSDIAQSFHMQTAQ) lie on the Periplasmic side of the membrane. The helical transmembrane segment at 50-70 (VGIMLTIYAWVVALMSLPFML) threads the bilayer. Residues 71–80 (MTSQVERRKL) lie on the Cytoplasmic side of the membrane. Residues 81-101 (LICLFVVFIASHVLSFLSWSF) form a helical membrane-spanning segment. T102 is a topological domain (periplasmic). Residues 103–123 (VLVISRIGVAFAHAIFWSITA) traverse the membrane as a helical segment. Residues 124–135 (SLAIRMAPAGKR) lie on the Cytoplasmic side of the membrane. A helical transmembrane segment spans residues 136-156 (AQALSLIATGTALAMVLGLPL). The Periplasmic portion of the chain corresponds to 157–169 (GRIVGQYFGWRMT). Residues 170–190 (FFAIGIGALITLLCLIKLLPL) form a helical membrane-spanning segment. Topologically, residues 191-208 (LPSEHSGSLKSLPLLFRR) are cytoplasmic. The chain crosses the membrane as a helical span at residues 209–229 (PALMSIYLLTVVVVTAHYTAY). The Periplasmic portion of the chain corresponds to 230 to 245 (SYIEPFVQNIAGFSAN). A helical membrane pass occupies residues 246 to 266 (FATALLLLLGGAGIIGSVIFG). At 267 to 274 (KLGNQYAS) the chain is on the cytoplasmic side. Residues 275 to 295 (ALVSTAIALLLVCLALLLPAA) form a helical membrane-spanning segment. Topologically, residues 296-298 (NSE) are periplasmic. A helical membrane pass occupies residues 299–319 (IHLGVLSIFWGIAMMIIGLGM). The Cytoplasmic segment spans residues 320–332 (QVKVLALAPDATD). Residues 333–353 (VAMALFSGIFNIGIGAGALVG) form a helical membrane-spanning segment. Over 354–363 (NQVSLHWSMS) the chain is Periplasmic. Residues 364–384 (MIGYVGTVPAFAALIWSIIIF) traverse the membrane as a helical segment. Over 385–396 (RRWPVTLEEQTQ) the chain is Cytoplasmic.

It belongs to the major facilitator superfamily. SotB (TC 2.A.1.2) family.

It is found in the cell inner membrane. Functionally, involved in the efflux of sugars. The physiological role may be the reduction of the intracellular concentration of toxic sugars or sugar metabolites. The sequence is that of Probable sugar efflux transporter from Escherichia coli O157:H7.